A 503-amino-acid polypeptide reads, in one-letter code: Na(+)-translocating NADH-quinone reductase subunit B (503 aa).

3 consecutive transmembrane segments (helical) span residues Met-55–Leu-75, Ile-120–Ile-142, and Leu-160–Val-180. Thr-248 is subject to FMN phosphoryl threonine. 5 consecutive transmembrane segments (helical) span residues Thr-361–Trp-381, Met-384–Leu-404, Phe-417–Met-437, Trp-452–Tyr-472, and Gly-475–Leu-495.

It belongs to the NqrB/RnfD family. As to quaternary structure, composed of six subunits; NqrA, NqrB, NqrC, NqrD, NqrE and NqrF. FMN is required as a cofactor.

Its subcellular location is the cell inner membrane. The catalysed reaction is a ubiquinone + n Na(+)(in) + NADH + H(+) = a ubiquinol + n Na(+)(out) + NAD(+). NQR complex catalyzes the reduction of ubiquinone-1 to ubiquinol by two successive reactions, coupled with the transport of Na(+) ions from the cytoplasm to the periplasm. NqrA to NqrE are probably involved in the second step, the conversion of ubisemiquinone to ubiquinol. The polypeptide is Na(+)-translocating NADH-quinone reductase subunit B (Chlamydia trachomatis serovar A (strain ATCC VR-571B / DSM 19440 / HAR-13)).